Consider the following 236-residue polypeptide: Rab-like protein 3 (236 aa).

The interval 1–236 (MASLDRVKVL…GGTLKSLHYD (236 aa)) is small GTPase-like. Residues 16–21 (GVGKSS), 148–150 (KLD), and 179–180 (DC) each bind GTP.

The protein belongs to the small GTPase superfamily. Rab family. In terms of assembly, homodimer. Interacts with GPR89; the interaction stabilizes GPR89. Interacts with RAP1GDS1.

Its function is as follows. Required for KRAS signaling regulation and modulation of cell proliferation. Regulator of KRAS prenylation, and probably prenylation of other small GTPases. Required for lymphocyte development and function. Not required for myeloid cell development. The sequence is that of Rab-like protein 3 (RABL3) from Bos taurus (Bovine).